A 535-amino-acid polypeptide reads, in one-letter code: CTP synthase (535 aa).

The tract at residues 1–267 (MTKYIFVTGG…DQIVCDHLKL (267 aa)) is amidoligase domain. Serine 13 provides a ligand contact to CTP. Serine 13 provides a ligand contact to UTP. ATP is bound at residue 14–19 (SLGKGI). Tyrosine 54 contributes to the L-glutamine binding site. Residue aspartate 71 coordinates ATP. Mg(2+) contacts are provided by aspartate 71 and glutamate 141. CTP is bound by residues 148–150 (DIE), 188–193 (KTKPTQ), and lysine 224. Residues 188–193 (KTKPTQ) and lysine 224 each bind UTP. The Glutamine amidotransferase type-1 domain occupies 292-534 (RIALVGKYVE…VQASITNKES (243 aa)). Glycine 354 is a binding site for L-glutamine. Cysteine 381 serves as the catalytic Nucleophile; for glutamine hydrolysis. L-glutamine-binding positions include 382 to 385 (LGMQ), glutamate 405, and arginine 462. Active-site residues include histidine 507 and glutamate 509.

The protein belongs to the CTP synthase family. In terms of assembly, homotetramer.

The enzyme catalyses UTP + L-glutamine + ATP + H2O = CTP + L-glutamate + ADP + phosphate + 2 H(+). It carries out the reaction L-glutamine + H2O = L-glutamate + NH4(+). The catalysed reaction is UTP + NH4(+) + ATP = CTP + ADP + phosphate + 2 H(+). The protein operates within pyrimidine metabolism; CTP biosynthesis via de novo pathway; CTP from UDP: step 2/2. Its activity is regulated as follows. Allosterically activated by GTP, when glutamine is the substrate; GTP has no effect on the reaction when ammonia is the substrate. The allosteric effector GTP functions by stabilizing the protein conformation that binds the tetrahedral intermediate(s) formed during glutamine hydrolysis. Inhibited by the product CTP, via allosteric rather than competitive inhibition. Catalyzes the ATP-dependent amination of UTP to CTP with either L-glutamine or ammonia as the source of nitrogen. Regulates intracellular CTP levels through interactions with the four ribonucleotide triphosphates. This is CTP synthase from Bacillus cytotoxicus (strain DSM 22905 / CIP 110041 / 391-98 / NVH 391-98).